The following is a 183-amino-acid chain: Apo-citrate lyase phosphoribosyl-dephospho-CoA transferase (183 aa).

The protein belongs to the CitX family.

The enzyme catalyses apo-[citrate lyase ACP] + 2'-(5''-triphospho-alpha-D-ribosyl)-3'-dephospho-CoA = holo-[citrate lyase ACP] + diphosphate. Transfers 2-(5''-triphosphoribosyl)-3'-dephosphocoenzyme-A on a serine residue to the apo-acyl carrier protein (gamma chain) of the citrate lyase to yield holo-acyl carrier protein. This Shigella flexneri serotype 5b (strain 8401) protein is Apo-citrate lyase phosphoribosyl-dephospho-CoA transferase.